A 259-amino-acid chain; its full sequence is Probable metal transport system ATP-binding protein TC_0339 (259 aa).

An ABC transporter domain is found at 9 to 241; it reads WAVDDLCVNY…AIFQAYGCEL (233 aa). 41–48 contributes to the ATP binding site; the sequence is GPNGAGKS.

This sequence belongs to the ABC transporter superfamily.

The protein localises to the cell inner membrane. Its function is as follows. Part of an ATP-driven transport system TC_0338/TC_0339/TC_0341/TC_0342 for a metal. Probably responsible for energy coupling to the transport system. In Chlamydia muridarum (strain MoPn / Nigg), this protein is Probable metal transport system ATP-binding protein TC_0339.